The sequence spans 366 residues: MTAMMKAAVFVEPGRIELADKPIPDIGPNDALVRITTTTICGTDVHILKGEYPVAKGLTVGHEPVGIIEKLGSAVTGYREGQRVIAGAICPNFNSYAAQDGVASQDGSYLMASGQCGCHGYKATAGWRFGNMIDGTQAEYVLVPDAQANLTPIPDGLTDEQVLMCPDIMSTGFKGAENANIRIGDTVAVFAQGPIGLCATAGARLCGATTIIAIDGNDHRLEIARKMGADVVLNFRNCDVVDEVMKLTGGRGVDASIEALGTQATFEQSLRVLKPGGTLSSLGVYSSDLTIPLSAFAAGLGDHKINTALCPGGKERMRRLINVIESGRVDLGALVTHQYRLDDIVAAYDLFANQRDGVLKIAIKPH.

Residues Cys41, His62, Glu63, and Asp167 each coordinate Zn(2+).

Belongs to the zinc-containing alcohol dehydrogenase family. In terms of assembly, homotetramer. Requires Zn(2+) as cofactor.

The catalysed reaction is a primary alcohol + NAD(+) = an aldehyde + NADH + H(+). It catalyses the reaction a secondary alcohol + NAD(+) = a ketone + NADH + H(+). The enzyme catalyses (R,R)-butane-2,3-diol + NAD(+) = (R)-acetoin + NADH + H(+). It carries out the reaction an aldehyde + NAD(+) + H2O = a carboxylate + NADH + 2 H(+). Functionally, multifunctional alcohol dehydrogenase exhibiting NAD(+)-dependent dehydrogenase activities for 2,3-butanediol, ethanol and acetaldehyde, and reductase activities for acetoin (NADH-dependent), and diacetyl and acetaldehyde (independently of whether NADH or NADPH is the reductant). The rate of oxidation of 2,3-butanediol is much higher than for the oxidation of ethanol. Has acetaldehyde dehydrogenase activity leading to acetate formation. May function in the release of excess reducing power in the absence of exogenous hydrogen acceptors such as oxygen. In Cupriavidus necator (strain ATCC 17699 / DSM 428 / KCTC 22496 / NCIMB 10442 / H16 / Stanier 337) (Ralstonia eutropha), this protein is Alcohol dehydrogenase (adh).